The chain runs to 142 residues: Histone H2B (142 aa).

Over residues 1 to 10 the composition is skewed to basic and acidic residues; sequence MPPKPAEKKP. The interval 1–50 is disordered; that stretch reads MPPKPAEKKPSSTAGKAPASSAGKAPAEAAKKTSKAPAKSGEKKKATKVR. Lysine 8 and lysine 9 each carry N6-acetyllysine; alternate. Glycyl lysine isopeptide (Lys-Gly) (interchain with G-Cter in SUMO); alternate cross-links involve residues lysine 8 and lysine 9. The span at 11–28 shows a compositional bias: low complexity; it reads SSTAGKAPASSAGKAPAE. Position 24 is an N6-acetyllysine (lysine 24). Over residues 40–50 the composition is skewed to basic and acidic residues; it reads SGEKKKATKVR. Lysine 137 is covalently cross-linked (Glycyl lysine isopeptide (Lys-Gly) (interchain with G-Cter in ubiquitin)).

This sequence belongs to the histone H2B family. As to quaternary structure, the nucleosome is a histone octamer containing two molecules each of H2A, H2B, H3 and H4 assembled in one H3-H4 heterotetramer and two H2A-H2B heterodimers. The octamer wraps approximately 147 bp of DNA. Post-translationally, monoubiquitinated by the UBC2-BRE1 complex to form H2BK123ub1. H2BK123ub1 gives a specific tag for epigenetic transcriptional activation and is also prerequisite for H3K4me and H3K79me formation. H2BK123ub1 also modulates the formation of double-strand breaks during meiosis and is a prerequisite for DNA-damage checkpoint activation. In terms of processing, acetylation of N-terminal lysines and particularly formation of H2BK11ac has a positive effect on transcription. Sumoylation to form H2BK6su or H2BK7su occurs preferentially near the telomeres and represses gene transcription.

Its subcellular location is the nucleus. It localises to the chromosome. Core component of nucleosome. Nucleosomes wrap and compact DNA into chromatin, limiting DNA accessibility to the cellular machineries which require DNA as a template. Histones thereby play a central role in transcription regulation, DNA repair, DNA replication and chromosomal stability. DNA accessibility is regulated via a complex set of post-translational modifications of histones, also called histone code, and nucleosome remodeling. The sequence is that of Histone H2B (HTB1) from Mycosarcoma maydis (Corn smut fungus).